Reading from the N-terminus, the 1708-residue chain is Rapamycin-insensitive companion of mTOR (1708 aa).

Positions 1–789 are interaction with NBN; sequence MAAIGRGRSL…DKANLHALIQ (789 aa). A phosphoserine mark is found at Ser-21, Ser-35, and Ser-265. Lys-274 participates in a covalent cross-link: Glycyl lysine isopeptide (Lys-Gly) (interchain with G-Cter in ubiquitin). Residues 521-570 are ribosome-binding domain; the sequence is LKDTEEALLINLRDSQVLQHKENLDWDWNLIGTILKWPNVNLRNYKDEQL. The ATP site is built by Asn-543, Arg-572, and Arg-576. Positions 1021 to 1043 are enriched in low complexity; that stretch reads TLSLNSESTSSRHNSESESAPSS. The segment at 1021-1045 is disordered; that stretch reads TLSLNSESTSSRHNSESESAPSSMF. N6-acetyllysine is present on residues Lys-1092 and Lys-1095. Disordered regions lie at residues 1101–1198 and 1218–1247; these read SLTL…ENTS and SFNT…PTAM. Residue Thr-1103 is modified to Phosphothreonine. An N6-acetyllysine mark is found at Lys-1116, Lys-1119, and Lys-1125. Thr-1135 bears the Phosphothreonine; by RPS6KB1 mark. Ser-1138 is subject to Phosphoserine. The segment covering 1147 to 1158 has biased composition (polar residues); that stretch reads FTSSSAQKSLQL. 3 positions are modified to phosphoserine: Ser-1161, Ser-1218, and Ser-1234. Residues 1221 to 1239 are compositionally biased toward low complexity; that stretch reads TDTTTSGISSMSSSPSRET. Thr-1270 carries the post-translational modification Phosphothreonine. Ser-1273, Ser-1277, Ser-1281, and Ser-1283 each carry phosphoserine. Thr-1294 carries the phosphothreonine modification. Phosphoserine is present on residues Ser-1301 and Ser-1312. The residue at position 1331 (Thr-1331) is a Phosphothreonine. A phosphoserine mark is found at Ser-1345 and Ser-1352. The residue at position 1375 (Thr-1375) is a Phosphothreonine. At Ser-1384 the chain carries Phosphoserine. Tyr-1385 is subject to Phosphotyrosine. Residues Ser-1387, Ser-1395, and Ser-1410 each carry the phosphoserine modification. Residues His-1514, Cys-1519, and Cys-1522 each contribute to the Zn(2+) site. 4 positions are modified to phosphoserine: Ser-1570, Ser-1573, Ser-1576, and Ser-1591. Zn(2+) is bound at residue Cys-1651.

It belongs to the RICTOR family. In terms of assembly, component of the mechanistic target of rapamycin complex 2 (mTORC2), consisting in two heterotretramers composed of MTOR, MLST8, RICTOR and MAPKAP1/SIN1. The mTORC2 core complex associates with PRR5/PROTOR1 and/or PRR5L/PROTOR2. Contrary to mTORC1, mTORC2 does not bind to and is not sensitive to FKBP12-rapamycin. Binds directly to MTOR and PRR5 within the TORC2 complex; interaction with MTOR is enhanced by deubiquitination of RICTOR by USP9X. Interaction with MAPKAP1 is not enhanced by RICTOR deubiquitination by USP9X. Interacts with CCDC28B. Interacts with NBN. Interacts with SIK3. Interacts with NCKAP1L. Interacts with ARMH4 (via cytoplasmic tail); this interaction bridges ARMH4 to the mTORC2 complex and inhibits the mTORC2 kinase activity. Interacts with UBXN2A. Interacts with TSPAN8. In terms of processing, phosphorylated by MTOR; when part of mTORC2. Phosphorylated at Thr-1135 by RPS6KB1 downstream of the mTORC1 complex: phosphorylation of RICTOR inhibits mTORC2 signaling by creating a binding site for 14-3-3 proteins. Phosphorylated at Ser-1234 by GSK3B in response to endoplasmic stress, inhibiting mTORC2 signaling. Ubiquitinated by the SCF(FBXW7) complex, leading to its degradation by the proteasome. Deubiquitinated by USP9X; deubiquitination stabilizes RICTOR and enhances its binding to MTOR, thus promoting mTORC2 complex assembly. Post-translationally, acetylated by EP300/p300 in response to glucose, leading to activate the mTORC2 complex. Acetylation by BLOC1S1/GCN5L1 in response to hypotoxic stress protects RICTOR against ubiquitination and subsequent degradation by the proteasome. In terms of tissue distribution, highest levels in liver and brain with expression also detected in heart, muscle, spleen and kidney (at protein level).

It is found in the cell membrane. The protein localises to the endoplasmic reticulum membrane. The protein resides in the lysosome membrane. Its function is as follows. Component of the mechanistic target of rapamycin complex 2 (mTORC2), which transduces signals from growth factors to pathways involved in proliferation, cytoskeletal organization, lipogenesis and anabolic output. In response to growth factors, mTORC2 phosphorylates and activates AGC protein kinase family members, including AKT (AKT1, AKT2 and AKT3), PKC (PRKCA, PRKCB and PRKCE) and SGK1. In contrast to mTORC1, mTORC2 is nutrient-insensitive. Within the mTORC2 complex, RICTOR probably acts as a molecular adapter. RICTOR is responsible for the FKBP12-rapamycin-insensitivity of mTORC2. mTORC2 plays a critical role in AKT1 activation by mediating phosphorylation of different sites depending on the context, such as 'Thr-450', 'Ser-473', 'Ser-477' or 'Thr-479', facilitating the phosphorylation of the activation loop of AKT1 on 'Thr-308' by PDPK1/PDK1 which is a prerequisite for full activation. mTORC2 catalyzes the phosphorylation of SGK1 at 'Ser-422' and of PRKCA on 'Ser-657'. The mTORC2 complex also phosphorylates various proteins involved in insulin signaling, such as FBXW8 and IGF2BP1. mTORC2 acts upstream of Rho GTPases to regulate the actin cytoskeleton, probably by activating one or more Rho-type guanine nucleotide exchange factors. mTORC2 promotes the serum-induced formation of stress-fibers or F-actin. Plays an essential role in embryonic growth and development. This Mus musculus (Mouse) protein is Rapamycin-insensitive companion of mTOR.